Consider the following 577-residue polypeptide: Pentatricopeptide repeat-containing protein At1g63400 (577 aa).

PPR repeat units lie at residues 49-83 (GSGD…RPLP), 84-118 (SIFE…GISH), 119-153 (NLYT…GYEP), 154-188 (SIVT…GYRP), 189-223 (DTIT…GCQP), 224-258 (NLVT…KIEA), 259-293 (NVVI…GVRP), 294-328 (NVIT…KINP), 329-363 (NVVT…SIDP), 364-398 (DIFT…DCFP), 399-433 (NVVT…GLVG), 434-468 (NTVT…GVHP), 469-503 (NIMT…KMEP), 504-538 (TIYT…GVKP), and 539-573 (DVII…GPLP).

This sequence belongs to the PPR family. P subfamily.

This Arabidopsis thaliana (Mouse-ear cress) protein is Pentatricopeptide repeat-containing protein At1g63400.